A 119-amino-acid chain; its full sequence is Protein TusC (119 aa).

This sequence belongs to the DsrF/TusC family. In terms of assembly, heterohexamer, formed by a dimer of trimers. The hexameric TusBCD complex contains 2 copies each of TusB, TusC and TusD. The TusBCD complex interacts with TusE.

The protein localises to the cytoplasm. Its function is as follows. Part of a sulfur-relay system required for 2-thiolation of 5-methylaminomethyl-2-thiouridine (mnm(5)s(2)U) at tRNA wobble positions. The protein is Protein TusC of Pectobacterium carotovorum subsp. carotovorum (strain PC1).